Reading from the N-terminus, the 353-residue chain is Peptide chain release factor 1 (353 aa).

Q230 is modified (N5-methylglutamine).

This sequence belongs to the prokaryotic/mitochondrial release factor family. In terms of processing, methylated by PrmC. Methylation increases the termination efficiency of RF1.

The protein localises to the cytoplasm. Peptide chain release factor 1 directs the termination of translation in response to the peptide chain termination codons UAG and UAA. The protein is Peptide chain release factor 1 of Leptospira biflexa serovar Patoc (strain Patoc 1 / ATCC 23582 / Paris).